The chain runs to 568 residues: CRISPR-associated exonuclease Cas4/endonuclease Cas1 fusion (568 aa).

Residues 1–209 (MSVVVTRYRG…KCSLAPVCLP (209 aa)) are CRISPR-associated exonuclease Cas4. [4Fe-4S] cluster is bound at residue cysteine 43. Mn(2+) is bound by residues aspartate 95 and glutamate 108. 3 residues coordinate [4Fe-4S] cluster: cysteine 198, cysteine 201, and cysteine 207. The interval 232–568 (VLHVATPGTR…PGLFATFRLR (337 aa)) is CRISPR-associated endonuclease Cas1. Glutamate 390, histidine 459, and glutamate 474 together coordinate Mn(2+).

The protein in the N-terminal section; belongs to the CRISPR-associated exonuclease Cas4 family. This sequence in the C-terminal section; belongs to the CRISPR-associated endonuclease Cas1 family. As to quaternary structure, homodimer, forms a heterotetramer with a Cas2 homodimer. Requires [4Fe-4S] cluster as cofactor. Mg(2+) serves as cofactor. Mn(2+) is required as a cofactor.

It carries out the reaction exonucleolytic cleavage in the 5'- to 3'-direction to yield nucleoside 3'-phosphates.. CRISPR (clustered regularly interspaced short palindromic repeat), is an adaptive immune system that provides protection against mobile genetic elements (viruses, transposable elements and conjugative plasmids). CRISPR clusters contain spacers, sequences complementary to antecedent mobile elements, and target invading nucleic acids. CRISPR clusters are transcribed and processed into CRISPR RNA (crRNA). The Cas4 region acts as a ssDNA exonuclease, while the Cas1 region acts as a dsDNA endonuclease. Involved in the integration of spacer DNA into the CRISPR cassette. The protein is CRISPR-associated exonuclease Cas4/endonuclease Cas1 fusion (cas4-cas1) of Myxococcus xanthus (strain DK1622).